The primary structure comprises 280 residues: uncharacterized protein (280 aa).

Helical transmembrane passes span 6–26, 38–58, 79–99, 105–125, 144–164, 171–191, and 231–251; these read YLVIILIIAGVISVLAFTPLV, VLAIVLFVYVFFGRQIIYLFP, IFLLDLCPFFAVIAPVFVFLK, GVLAVFGLFGALVTLFGELIF, NQIYFMMHFLSLLVSLAIILW, ISFFYIHVFALIYFSYVALMV, and LVFIVGFSLSYVAILLMTLFA.

Its subcellular location is the cell membrane. This is an uncharacterized protein from Mycoplasma genitalium (strain ATCC 33530 / DSM 19775 / NCTC 10195 / G37) (Mycoplasmoides genitalium).